Here is an 82-residue protein sequence, read N- to C-terminus: UPF0410 protein YeaQ (82 aa).

2 consecutive transmembrane segments (helical) span residues G26–I46 and G57–Y77.

Belongs to the UPF0410 family.

It is found in the cell inner membrane. The polypeptide is UPF0410 protein YeaQ (yeaQ) (Escherichia coli O157:H7).